A 402-amino-acid chain; its full sequence is Hyaluronan and proteoglycan link protein 4 (402 aa).

An N-terminal signal peptide occupies residues 1 to 29 (MVCARAALGPGALWAAAWGVLLLTAPAGA). The Ig-like C2-type domain maps to 46–161 (SVVVQTAPGQ…DAGMVKLDLE (116 aa)). 5 disulfides stabilise this stretch: Cys-68–Cys-143, Cys-185–Cys-266, Cys-209–Cys-230, Cys-293–Cys-363, and Cys-318–Cys-339. N-linked (GlcNAc...) asparagine glycosylation is present at Asn-132. Link domains follow at residues 163-268 (VVFP…FCFT) and 273-365 (GRVF…YCYR).

The protein belongs to the HAPLN family. In terms of tissue distribution, expressed predominantly in brain.

It localises to the secreted. The protein resides in the extracellular space. The protein localises to the extracellular matrix. Essential for the proper localization of brevican (BCAN), mainly as a perineuronal nets (PNNs)-type deposition in the brainstem and cerebellum thereby playing a key role in the formation and structural organization of PNNs. Contributes to the formation and transmission of inhibitory GABAergic synapses between Purkinje cells and deep cerebellar nuclei neurons. The protein is Hyaluronan and proteoglycan link protein 4 (HAPLN4) of Homo sapiens (Human).